A 478-amino-acid chain; its full sequence is UDP-N-acetylmuramate--L-alanine ligase (478 aa).

126-132 (GTHGKTT) is an ATP binding site.

It belongs to the MurCDEF family.

It localises to the cytoplasm. It catalyses the reaction UDP-N-acetyl-alpha-D-muramate + L-alanine + ATP = UDP-N-acetyl-alpha-D-muramoyl-L-alanine + ADP + phosphate + H(+). Its pathway is cell wall biogenesis; peptidoglycan biosynthesis. Its function is as follows. Cell wall formation. This chain is UDP-N-acetylmuramate--L-alanine ligase, found in Mycolicibacterium vanbaalenii (strain DSM 7251 / JCM 13017 / BCRC 16820 / KCTC 9966 / NRRL B-24157 / PYR-1) (Mycobacterium vanbaalenii).